We begin with the raw amino-acid sequence, 271 residues long: Phosphatidylinositol transfer protein alpha isoform (271 aa).

Positions 59, 61, 86, 90, 97, and 195 each coordinate a 1,2-diacyl-sn-glycero-3-phospho-(1D-myo-inositol). An N6-acetyllysine modification is found at lysine 216. A compositionally biased stretch (basic and acidic residues) spans 251-264 (TKRQLDEMRQKDPV). The disordered stretch occupies residues 251–271 (TKRQLDEMRQKDPVKGMTADD).

It belongs to the PtdIns transfer protein family. PI transfer class I subfamily. Phosphorylated by PKC in a calcium and phosphatidylserine-dependent manner.

It localises to the cytoplasm. The protein localises to the nucleus. It carries out the reaction a 1,2-diacyl-sn-glycero-3-phosphocholine(in) = a 1,2-diacyl-sn-glycero-3-phosphocholine(out). The catalysed reaction is a 1,2-diacyl-sn-glycero-3-phospho-(1D-myo-inositol)(in) = a 1,2-diacyl-sn-glycero-3-phospho-(1D-myo-inositol)(out). Its function is as follows. Catalyzes the transfer of phosphatidylinositol (PI) and phosphatidylcholine (PC) between membranes. Shows a preference for PI and PC containing shorter saturated or monosaturated acyl chains at the sn-1 and sn-2 positions. Preference order for PC is C16:1 &gt; C16:0 &gt; C18:1 &gt; C18:0 &gt; C20:4 and for PI is C16:1 &gt; C16:0 &gt; C18:1 &gt; C18:0 &gt; C20:4 &gt; C20:3. This is Phosphatidylinositol transfer protein alpha isoform (Pitpna) from Mus musculus (Mouse).